The primary structure comprises 315 residues: Microtubule-associated protein Jupiter (315 aa).

The segment covering 1–14 has biased composition (polar residues); sequence MISNFDCTDNQASS. 2 disordered regions span residues 1–37 and 51–89; these read MISN…QTPR and EKDN…PGKN. At Ser-24 the chain carries Phosphoserine. Thr-35 is modified (phosphothreonine). A compositionally biased stretch (basic and acidic residues) spans 62–76; it reads APRRGQKTVDSHSRL. A phosphothreonine mark is found at Thr-81 and Thr-85. 3 positions are modified to phosphoserine: Ser-94, Ser-122, and Ser-133. Disordered regions lie at residues 116–166 and 272–315; these read YNGK…ADDA and EGNP…SGLW. Low complexity predominate over residues 120-133; the sequence is SGSVSSASSSVSSS. Polar residues-rich tracts occupy residues 134–148 and 285–296; these read TENL…SVFR and DFTQRQESSNGG.

Belongs to the MAP Jupiter family.

It localises to the nucleus. The protein resides in the cytoplasm. It is found in the cytoskeleton. Its subcellular location is the spindle. Functionally, binds to all microtubule populations. The polypeptide is Microtubule-associated protein Jupiter (Drosophila sechellia (Fruit fly)).